Here is a 181-residue protein sequence, read N- to C-terminus: Adenine phosphoribosyltransferase (181 aa).

The protein belongs to the purine/pyrimidine phosphoribosyltransferase family. As to quaternary structure, homodimer.

It localises to the cytoplasm. The catalysed reaction is AMP + diphosphate = 5-phospho-alpha-D-ribose 1-diphosphate + adenine. The protein operates within purine metabolism; AMP biosynthesis via salvage pathway; AMP from adenine: step 1/1. In terms of biological role, catalyzes a salvage reaction resulting in the formation of AMP, that is energically less costly than de novo synthesis. This Shewanella loihica (strain ATCC BAA-1088 / PV-4) protein is Adenine phosphoribosyltransferase.